A 931-amino-acid polypeptide reads, in one-letter code: MVRHDPFTNSVSEDSSFTPSVNPSTPYPQSGHYRPYYPPQLTYCQGQQGYQYDHTGDVGYGGRSRRHGSWASVNNEDNEELTPLTTGPASSSTFLTTDPYLSGGPDLPLSSSSASISSAGADFLRRQTVPRRGATIKKIKLTNGNFIADYPVPGPVSSSVEAKWLNDKTSNEFWHMRYTAATCDPDDFTPENGWKLKTTSYNRETELLVAITSYNEDKILYARTLHNVMLNIRDICNTKASKFWRRSAEEGRPGWQKIVVALVADGLDPMDKQVLDVLQTIGVFQDGILKKEVDGKKTAAHIFEYTTQLSIDATPQLVQPHPGDPNNLVPVQIIFVLKQENSKKINSHRWLFNALGRQLQPEICVLLDAGTKPGHKAIYHLWEAFYNNQNLGGACGEIHAMIKKGVKLLNPLVAAQNFEYKMSNILDKPLESSFGYVSVLPGAFSAYRYKAIQGRPLTQYFHGDATLAARLGKKGIYGMGIFTKNMFLAEDRILCFELVAKKGEKWVLQYVKPSKAETDVPEQAAELISQRRRWLNGSFAASVYSVFHFFRLYRSGHGPIRMLFLHIQAIYNIFSLIFSWFALANLWLTFSIIIELLPESANINLFGTADITHWINLVFAWVYLAFLMLQLVLALGNRPKAEKGLYILTLWVYAFLSFYLIVCSIILSVVAFKGALRDGGSIGAKLGNLFNSTNGVLVAAIMSTIGIYLIASFLYRDPWHMFSSFPQYMLLAPSFTNVLNIYAFCNLHDVSWGTKGSDRAESLPAISSSKQKDGETAVVEEQQRSQGELDESFKQVVRRAVAPYKPEDADEKPNLDDQNRTFRTRLVVVWLLTNAALAISIQTLNGLDTTKPLVEACLPNSYNPENGTVIVSTNGTCITQALEHDGDKLQDKQQIYFQAILWTTFALSMVRFIGCVFYWAMRQMGRCWRRN.

Disordered stretches follow at residues methionine 1 to arginine 34 and glycine 56 to serine 92. 2 stretches are compositionally biased toward polar residues: residues phenylalanine 7–proline 28 and proline 83–serine 92. An N-linked (GlcNAc...) asparagine glycan is attached at asparagine 536. A run of 3 helical transmembrane segments spans residues isoleucine 573–isoleucine 593, isoleucine 615–leucine 635, and isoleucine 647–leucine 667. Residue asparagine 691 is glycosylated (N-linked (GlcNAc...) asparagine). A run of 2 helical transmembrane segments spans residues glycine 695 to tyrosine 715 and phenylalanine 725 to cysteine 745. The disordered stretch occupies residues leucine 763–leucine 789. Asparagine 819 is a glycosylation site (N-linked (GlcNAc...) asparagine). The chain crosses the membrane as a helical span at residues leucine 826–glycine 846. 2 N-linked (GlcNAc...) asparagine glycosylation sites follow: asparagine 866 and asparagine 874. Residues alanine 899–tryptophan 919 form a helical membrane-spanning segment.

It belongs to the chitin synthase family. Class III subfamily.

Its subcellular location is the cell membrane. It carries out the reaction [(1-&gt;4)-N-acetyl-beta-D-glucosaminyl](n) + UDP-N-acetyl-alpha-D-glucosamine = [(1-&gt;4)-N-acetyl-beta-D-glucosaminyl](n+1) + UDP + H(+). In terms of biological role, polymerizes chitin, a structural polymer of the cell wall and septum, by transferring the sugar moiety of UDP-GlcNAc to the non-reducing end of the growing chitin polymer. The sequence is that of Chitin synthase 7 from Cryptococcus neoformans var. grubii serotype A (strain H99 / ATCC 208821 / CBS 10515 / FGSC 9487) (Filobasidiella neoformans var. grubii).